The sequence spans 221 residues: ATP synthase subunit a 1 (221 aa).

The next 5 helical transmembrane spans lie at 20–40, 78–98, 108–128, 174–194, and 196–216; these read LTIV…ALIT, YLPF…CTVI, LSTT…FGIA, MILV…MNIL, and LLTG…YIAA.

The protein belongs to the ATPase A chain family. In terms of assembly, F-type ATPases have 2 components, CF(1) - the catalytic core - and CF(0) - the membrane proton channel. CF(1) has five subunits: alpha(3), beta(3), gamma(1), delta(1), epsilon(1). CF(0) has four main subunits: a, b, b' and c.

The protein resides in the cell inner membrane. Key component of the proton channel; it plays a direct role in the translocation of protons across the membrane. This Chlorobaculum tepidum (strain ATCC 49652 / DSM 12025 / NBRC 103806 / TLS) (Chlorobium tepidum) protein is ATP synthase subunit a 1.